Reading from the N-terminus, the 301-residue chain is GTP cyclohydrolase FolE2 (301 aa).

Belongs to the GTP cyclohydrolase IV family.

The catalysed reaction is GTP + H2O = 7,8-dihydroneopterin 3'-triphosphate + formate + H(+). The protein operates within cofactor biosynthesis; 7,8-dihydroneopterin triphosphate biosynthesis; 7,8-dihydroneopterin triphosphate from GTP: step 1/1. Its function is as follows. Converts GTP to 7,8-dihydroneopterin triphosphate. The polypeptide is GTP cyclohydrolase FolE2 (Pseudomonas syringae pv. syringae (strain B728a)).